The sequence spans 100 residues: Carboxysome shell vertex protein CcmL (100 aa).

Residues 1 to 83 (MQIGRVRGTV…VDAVVIGIID (83 aa)) form the BMV domain.

Belongs to the CcmL/EutN family. CcmL subfamily. Homopentamer. Interacts with full-length CcmM.

The protein resides in the carboxysome. Its function is as follows. Probably forms vertices in the carboxysome, a polyhedral inclusion where RuBisCO (ribulose bisphosphate carboxylase, rbcL-rbcS) is sequestered. Has been modeled to induce curvature upon insertion into an otherwise flat hexagonal molecular layer of CcmK subunits. In Gloeobacter violaceus (strain ATCC 29082 / PCC 7421), this protein is Carboxysome shell vertex protein CcmL.